The primary structure comprises 177 residues: 3-hydroxydecanoyl-[acyl-carrier-protein] dehydratase (177 aa).

The active site involves His-76.

It belongs to the thioester dehydratase family. FabA subfamily. As to quaternary structure, homodimer.

It is found in the cytoplasm. The enzyme catalyses a (3R)-hydroxyacyl-[ACP] = a (2E)-enoyl-[ACP] + H2O. It carries out the reaction (3R)-hydroxydecanoyl-[ACP] = (2E)-decenoyl-[ACP] + H2O. The catalysed reaction is (2E)-decenoyl-[ACP] = (3Z)-decenoyl-[ACP]. The protein operates within lipid metabolism; fatty acid biosynthesis. Functionally, necessary for the introduction of cis unsaturation into fatty acids. Catalyzes the dehydration of (3R)-3-hydroxydecanoyl-ACP to E-(2)-decenoyl-ACP and then its isomerization to Z-(3)-decenoyl-ACP. Can catalyze the dehydratase reaction for beta-hydroxyacyl-ACPs with saturated chain lengths up to 16:0, being most active on intermediate chain length. The polypeptide is 3-hydroxydecanoyl-[acyl-carrier-protein] dehydratase (Mannheimia succiniciproducens (strain KCTC 0769BP / MBEL55E)).